The primary structure comprises 216 residues: Phosphatidylserine decarboxylase proenzyme (216 aa).

Ser183 (schiff-base intermediate with substrate; via pyruvic acid) is an active-site residue. The residue at position 183 (Ser183) is a Pyruvic acid (Ser); by autocatalysis.

The protein belongs to the phosphatidylserine decarboxylase family. PSD-A subfamily. In terms of assembly, heterodimer of a large membrane-associated beta subunit and a small pyruvoyl-containing alpha subunit. Pyruvate serves as cofactor. Post-translationally, is synthesized initially as an inactive proenzyme. Formation of the active enzyme involves a self-maturation process in which the active site pyruvoyl group is generated from an internal serine residue via an autocatalytic post-translational modification. Two non-identical subunits are generated from the proenzyme in this reaction, and the pyruvate is formed at the N-terminus of the alpha chain, which is derived from the carboxyl end of the proenzyme. The post-translation cleavage follows an unusual pathway, termed non-hydrolytic serinolysis, in which the side chain hydroxyl group of the serine supplies its oxygen atom to form the C-terminus of the beta chain, while the remainder of the serine residue undergoes an oxidative deamination to produce ammonia and the pyruvoyl prosthetic group on the alpha chain.

The protein localises to the cell membrane. The enzyme catalyses a 1,2-diacyl-sn-glycero-3-phospho-L-serine + H(+) = a 1,2-diacyl-sn-glycero-3-phosphoethanolamine + CO2. The protein operates within phospholipid metabolism; phosphatidylethanolamine biosynthesis; phosphatidylethanolamine from CDP-diacylglycerol: step 2/2. Its function is as follows. Catalyzes the formation of phosphatidylethanolamine (PtdEtn) from phosphatidylserine (PtdSer). The polypeptide is Phosphatidylserine decarboxylase proenzyme (Chlorobaculum tepidum (strain ATCC 49652 / DSM 12025 / NBRC 103806 / TLS) (Chlorobium tepidum)).